Here is a 122-residue protein sequence, read N- to C-terminus: Acidic phospholipase A2 5 (122 aa).

Disulfide bonds link cysteine 26/cysteine 115, cysteine 28/cysteine 44, cysteine 43/cysteine 95, cysteine 49/cysteine 122, cysteine 50/cysteine 88, cysteine 57/cysteine 81, and cysteine 75/cysteine 86. Residues phenylalanine 27, glycine 29, and glycine 31 each coordinate Ca(2+). Residue histidine 47 is part of the active site. Residue aspartate 48 coordinates Ca(2+). Aspartate 89 is a catalytic residue.

It belongs to the phospholipase A2 family. Group II subfamily. D49 sub-subfamily. In terms of assembly, monomer (predominant). Non-covalently linked homodimers are also observed. Ca(2+) is required as a cofactor. Expressed by the venom gland.

The protein localises to the secreted. The enzyme catalyses a 1,2-diacyl-sn-glycero-3-phosphocholine + H2O = a 1-acyl-sn-glycero-3-phosphocholine + a fatty acid + H(+). Preincubation with heparin slightly increase the enzymatic activity. In terms of biological role, snake venom phospholipase A2 (PLA2) that inhibits platelet aggregation induced by ADP, arachidonic acid and PAF. Acts in a enzymatic independent manner on a proteinase-activated receptor (PAR1, F2R) to evoke calcium release through the inositol 1,4,5-trisphosphate receptor (ITPR1, IP3R) and induces mouse aorta contraction. PAR1, phospholipase C and IP3R inhibitors suppress PA2-induced aorta contraction. PLA2 catalyzes the calcium-dependent hydrolysis of the 2-acyl groups in 3-sn-phosphoglycerides. The sequence is that of Acidic phospholipase A2 5 from Trimeresurus stejnegeri (Chinese green tree viper).